The primary structure comprises 550 residues: MCHRSHGRSLRPPSPLLLLLPLLLQSPWAAGAAEKHNSAGVHYATAYWLPDTKAVEIKMVLDKKGDAYGFYNDSIQTTGWGVLEIKAGYGSQILSNEIIMFLAGYLEGYLTALHMYDHFTNLYPQLIKNPSIVKKVQDFMEKQELWTRKNIKDQKDDPFWRHTGYVVSQLDGMYLGAQKRASEEEMKPMTMFQIQFLNAVGDLLDLIPSLSPTKSSSLKKFKIWEMGHCSALIKVLPGFENIYFAHSSWYTYAAMLRIYKHWDFNIKDKYTASNRLSFSSYPGFLESLDDFYILSSGLILLQTTNSVYNKTLLKLVVPESLLAWQRVRVANMMAQGGKEWSQLFSMYNSGTYNNQYMVLDLKKVTLKKSIDRGALYVVEQIPTYVEYSDQTNILRKGYWASYNIPFHKTVYNWSGYPLLVHKLGLDYSYDLAPRAKIFRRDQGTVTDMASMKHIMRYNNYKVDPYSKGDPCSTICCREDLNEASPSPGGCYDTKVADIFLASQYKAYAISGPTVQNGLPPFNWNRFNDTLHQGMPDVFDFDFVTMKPILT.

The N-terminal stretch at 1 to 39 is a signal peptide; the sequence is MCHRSHGRSLRPPSPLLLLLPLLLQSPWAAGAAEKHNSA. The N-linked (GlcNAc...) (high mannose) asparagine; alternate glycan is linked to Asn-72. Asn-72 carries an N-linked (GlcNAc...) (hybrid) asparagine; alternate glycan. A propeptide spans 210–228 (removed in mature form); sequence LSPTKSSSLKKFKIWEMGH. N-linked (GlcNAc...) (high mannose) asparagine; alternate glycans are attached at residues Asn-309 and Asn-412. N-linked (GlcNAc...) (hybrid) asparagine; alternate glycosylation is found at Asn-309 and Asn-412. Disulfide bonds link Cys-471-Cys-476 and Cys-475-Cys-490. N-linked (GlcNAc...) (high mannose) asparagine; alternate glycosylation occurs at Asn-527. The N-linked (GlcNAc...) (hybrid) asparagine; alternate glycan is linked to Asn-527.

Belongs to the phospholipase B-like family. As to quaternary structure, may form a homodimer, each monomer is composed of a chain A and a chain B. In terms of processing, the maturation cleavages that produces chains A and B are required to open the putative substrate binding pocket. Both chains A and B remain associated in the mature protein.

It is found in the lysosome. Functionally, exhibits weak phospholipase activity, acting on various phospholipids, including phosphatidylcholine, phosphatidylinositol, phosphatidylethanolamine and lysophospholipids. However, in view of the small size of the putative binding pocket, it has been proposed that it may act rather as an amidase or a peptidase. This chain is Phospholipase B-like 1 (Plbd1), found in Rattus norvegicus (Rat).